The sequence spans 334 residues: Ornithine carbamoyltransferase (334 aa).

Carbamoyl phosphate contacts are provided by residues 57 to 60, Q84, R108, and 135 to 138; these read STRT and HPTQ. Residues N169, D233, and 237–238 each bind L-ornithine; that span reads SM. Carbamoyl phosphate contacts are provided by residues 275–276 and R320; that span reads CL.

This sequence belongs to the aspartate/ornithine carbamoyltransferase superfamily. OTCase family.

It localises to the cytoplasm. The catalysed reaction is carbamoyl phosphate + L-ornithine = L-citrulline + phosphate + H(+). The protein operates within amino-acid biosynthesis; L-arginine biosynthesis; L-arginine from L-ornithine and carbamoyl phosphate: step 1/3. In terms of biological role, reversibly catalyzes the transfer of the carbamoyl group from carbamoyl phosphate (CP) to the N(epsilon) atom of ornithine (ORN) to produce L-citrulline. In Vibrio campbellii (strain ATCC BAA-1116), this protein is Ornithine carbamoyltransferase.